Here is a 387-residue protein sequence, read N- to C-terminus: Chorismate synthase (387 aa).

Residues Arg-39 and Arg-45 each coordinate NADP(+). FMN is bound by residues 130-132, 251-252, Gly-295, 310-314, and Arg-336; these read RSS, NA, and KPIPT.

Belongs to the chorismate synthase family. In terms of assembly, homotetramer. It depends on FMNH2 as a cofactor.

The enzyme catalyses 5-O-(1-carboxyvinyl)-3-phosphoshikimate = chorismate + phosphate. It functions in the pathway metabolic intermediate biosynthesis; chorismate biosynthesis; chorismate from D-erythrose 4-phosphate and phosphoenolpyruvate: step 7/7. Catalyzes the anti-1,4-elimination of the C-3 phosphate and the C-6 proR hydrogen from 5-enolpyruvylshikimate-3-phosphate (EPSP) to yield chorismate, which is the branch point compound that serves as the starting substrate for the three terminal pathways of aromatic amino acid biosynthesis. This reaction introduces a second double bond into the aromatic ring system. The sequence is that of Chorismate synthase from Exiguobacterium sp. (strain ATCC BAA-1283 / AT1b).